The chain runs to 163 residues: Arginine repressor (163 aa).

Belongs to the ArgR family.

The protein resides in the cytoplasm. Its pathway is amino-acid biosynthesis; L-arginine biosynthesis [regulation]. Its function is as follows. Regulates arginine biosynthesis genes. The sequence is that of Arginine repressor from Anaeromyxobacter dehalogenans (strain 2CP-C).